Reading from the N-terminus, the 472-residue chain is MNGDVQSVIRGYLERAQVAKTMSDAGRWNEAGDLLRQLMTDVKSCKISASNRDEHDARNTFLRALEANLKLVQQNVRDEDDLHEAMTRQSGSPEPPADPDVWSKPSPPLPSSSKFGATKKGVGAAGPRPREISKSTSSMSTNPADVKPANPTQGILPQNSAGDSFDASAYDAYIVQAVRGTMATNTENTMSLDDIIGMHDVKQVLHEAVTLPLLVPEFFQGLRSPWKAMVLAGPPGTGKTLIARAIASESSSTFFTVSSTDLSSKWRGDSEKIVRLLFELARFYAPSIIFIDEIDTLGGQRGNSGEHEASRRVKSEFLVQMDGSQNKFDSRRVFVLAATNIPWELDEALRRRFEKRIFIPLPDIDARKKLIEKSMEGTPKSDEINYDDLAARTEGFSGADVVSLCRTAAINVLRRYDTKSLRGGELTAAMESLKAELVRNIDFEAALQAVSPSAGPDTMLKCKEWCDSFGAM.

The interval 83-161 (HEAMTRQSGS…TQGILPQNSA (79 aa)) is disordered. Position 92 is a phosphoserine; by mbk-2 (serine 92). Polar residues-rich tracts occupy residues 134–143 (KSTSSMSTNP) and 150–161 (NPTQGILPQNSA). Residues 233 to 240 (GPPGTGKT) and 351 to 352 (RR) contribute to the ATP site.

It belongs to the AAA ATPase family. Katanin p60 subunit A1 subfamily. In terms of assembly, homohexamer; ATP hydrolysis initiates a cycle between an open spiral and a closed ring conformation which is probably involved in pulling tubulin dimers out from microtubules. Interacts with mei-2, which may serve as a targeting subunit. Interacts with mel-26, which targets mei-1 for ubiquitin mediated proteolysis. Interacts with phosphatase pph-4.1. Post-translationally, phosphorylated. Phosphorylation by mbk-2 is required for its rapid degradation following meiosis II. Likely dephosphorylated by the PP4 complex composed of catalytic subunit pph-4.1 and regulatory subunit ppfr-1. In terms of processing, polyubiquitination targets the protein for rapid degradation via the ubiquitin system at the end of meiosis. The BTB domain protein mel-26 may serve to specifically target mei-1 for ubiquitination by cul-3 containing complexes. The cul-3 protein is in turn regulated by neddylation by ned-8.

It localises to the cytoplasm. The protein localises to the cytoskeleton. The protein resides in the spindle pole. Its subcellular location is the chromosome. The catalysed reaction is n ATP + n H2O + a microtubule = n ADP + n phosphate + (n+1) alpha/beta tubulin heterodimers.. Its activity is regulated as follows. ATPase activity is stimulated by microtubules, which promote homooligomerization. ATP-dependent microtubule severing is stimulated by interaction with mei-2. Catalytic subunit of a complex which severs microtubules in an ATP-dependent manner. Microtubule severing may promote rapid reorganization of cellular microtubule arrays. Required specifically for meiotic spindle formation in the female germline; the presence of this protein is inimical to the formation of mitotic spindles. In body wall muscles, regulates organization of myosin thick filaments. This is Meiotic spindle formation protein mei-1 from Caenorhabditis elegans.